The primary structure comprises 578 residues: Dystrotelin (578 aa).

A ZZ-type zinc finger spans residues 223–279 (THPARCTLCRTFPITGLRYRCLKCLNFDICQMCFLSGLHSKSHQKSHPVIEHCIQMS). The Zn(2+) site is built by C228, C231, C243, C246, C252, C255, H265, and H269. Residues 322-351 (HHAQARLLKKQLNQYKDKLQAIYTSQEERI) adopt a coiled-coil conformation. The segment at 382–475 (RLQPPGPSSS…QSQTQKMPQK (94 aa)) is disordered. Basic and acidic residues-rich tracts occupy residues 399–410 (KVDHSSTEKVPK) and 431–451 (PKLD…HALR). The span at 455 to 472 (SPETTLHSTRAQSQTQKM) shows a compositional bias: polar residues. The stretch at 503 to 537 (ALAAVEKKEAGNIKERKDELEEEELQELLSKLMDA) forms a coiled coil.

It is found in the cell membrane. This is Dystrotelin (DYTN) from Homo sapiens (Human).